Reading from the N-terminus, the 298-residue chain is Tyrosine recombinase XerC (298 aa).

The Core-binding (CB) domain maps to 2–88 (TDLHTDVERY…ALRSFFDWLV (87 aa)). Positions 109-288 (HLPKNIDVDD…DFQHLASVYD (180 aa)) constitute a Tyr recombinase domain. Catalysis depends on residues R148, K172, H240, R243, and H266. Y275 acts as the O-(3'-phospho-DNA)-tyrosine intermediate in catalysis.

The protein belongs to the 'phage' integrase family. XerC subfamily. In terms of assembly, forms a cyclic heterotetrameric complex composed of two molecules of XerC and two molecules of XerD, in which XerC interacts with XerD via its C-terminal region, XerD interacts with XerC via its C-terminal region and so on.

Its subcellular location is the cytoplasm. FtsK may regulate the catalytic switch between XerC and XerD in the heterotetrameric complex during the two steps of the recombination process. In terms of biological role, site-specific tyrosine recombinase, which acts by catalyzing the cutting and rejoining of the recombining DNA molecules. Binds cooperatively to specific DNA consensus sequences that are separated from XerD binding sites by a short central region, forming the heterotetrameric XerC-XerD complex that recombines DNA substrates. The complex is essential to convert dimers of the bacterial chromosome into monomers to permit their segregation at cell division. It also contributes to the segregational stability of plasmids. In the complex XerC specifically exchanges the top DNA strands. In Escherichia coli O157:H7, this protein is Tyrosine recombinase XerC.